The sequence spans 578 residues: E3 ubiquitin-protein ligase Praja-1 (578 aa).

A disordered region spans residues 1 to 298; it reads MSHQERIASQ…KVPRRRRTMA (298 aa). 2 stretches are compositionally biased toward basic and acidic residues: residues 57 to 67 and 107 to 116; these read DYSRYPPREYR and KFKDDPEKGA. Polar residues predominate over residues 151–163; that stretch reads SKQNGSSASQISS. At T231 the chain carries Phosphothreonine. Basic and acidic residues-rich tracts occupy residues 243 to 264 and 273 to 290; these read RWRDAADAEEAHAEGLARRGRG and RYAEDQDARSEQAKADKV. 2 positions are modified to phosphoserine: S317 and S319. The tract at residues 332-397 is disordered; sequence RSREQPQSSS…QASLEEGEIP (66 aa). A compositionally biased stretch (low complexity) spans 359-373; the sequence is AGAGSLASAGSNGSG. Residues 377 to 395 are compositionally biased toward acidic residues; the sequence is EVQDPSLQEEEQASLEEGE. Residues 530–571 form an RING-type zinc finger; it reads CPICCSEYVKGEVATELPCHHYFHKPCVSIWLQKSGTCPVCR.

As to quaternary structure, binds ubiquitin-conjugating enzymes (E2s). Binds, in vitro and in vivo, the MAGE conserved domain of MAGED1. Binds weakly Necdin, in vitro. Interacts with UBE2D2. In terms of processing, substrate for E2-dependent ubiquitination. Expressed in brain, liver, kidney. Highest levels in brain where it is found in many regions including cortical and subcortical areas and in neurons of the amygdala. Weak expression also found in testis. Also expressed in developing embryo.

It catalyses the reaction S-ubiquitinyl-[E2 ubiquitin-conjugating enzyme]-L-cysteine + [acceptor protein]-L-lysine = [E2 ubiquitin-conjugating enzyme]-L-cysteine + N(6)-ubiquitinyl-[acceptor protein]-L-lysine.. In terms of biological role, has E2-dependent E3 ubiquitin-protein ligase activity. Ubiquitinates MAGED1 antigen leading to its subsequent degradation by proteasome. May be involved in protein sorting. This chain is E3 ubiquitin-protein ligase Praja-1 (Pja1), found in Mus musculus (Mouse).